Reading from the N-terminus, the 356-residue chain is NADH-quinone oxidoreductase subunit H (356 aa).

The next 8 helical transmembrane spans lie at 18–38 (IVMIAQSVLLLVVLLVAIAYI), 87–107 (GVFLLAPLVSCVLALAAWAVI), 120–140 (VGILFIFAISSLSIYGIIMAG), 166–186 (IGFVIITVLLCAGTLNLSAVV), 205–225 (ILNWYVWPLFPMFVVFYVSAL), 265–285 (AITTMCALATILFLGGWLPPI), 292–312 (WVPGVIWFALKLFFMFFLIAM), and 333–353 (FLPLSLVMVVIVAGVLHFAGI).

Belongs to the complex I subunit 1 family. In terms of assembly, NDH-1 is composed of 14 different subunits. Subunits NuoA, H, J, K, L, M, N constitute the membrane sector of the complex.

It localises to the cell inner membrane. The catalysed reaction is a quinone + NADH + 5 H(+)(in) = a quinol + NAD(+) + 4 H(+)(out). Functionally, NDH-1 shuttles electrons from NADH, via FMN and iron-sulfur (Fe-S) centers, to quinones in the respiratory chain. The immediate electron acceptor for the enzyme in this species is believed to be ubiquinone. Couples the redox reaction to proton translocation (for every two electrons transferred, four hydrogen ions are translocated across the cytoplasmic membrane), and thus conserves the redox energy in a proton gradient. This subunit may bind ubiquinone. The protein is NADH-quinone oxidoreductase subunit H of Bradyrhizobium sp. (strain BTAi1 / ATCC BAA-1182).